The sequence spans 349 residues: Nuclear distribution protein nudE homolog 1-B (349 aa).

Residues 22–189 are a coiled coil; that stretch reads VAMKYKQCSE…ELAVQQKQEK (168 aa).

The protein belongs to the nudE family. As to quaternary structure, self-associates. Interacts with pafah1b1. Post-translationally, phosphorylated in mitosis.

Its subcellular location is the cytoplasm. The protein resides in the cytoskeleton. It localises to the microtubule organizing center. It is found in the centrosome. The protein localises to the spindle. Its subcellular location is the chromosome. The protein resides in the centromere. It localises to the kinetochore. It is found in the cleavage furrow. The protein localises to the cytoplasmic vesicle membrane. Its function is as follows. Required for centrosome duplication and formation and function of the mitotic spindle. The polypeptide is Nuclear distribution protein nudE homolog 1-B (nde1-b) (Xenopus laevis (African clawed frog)).